An 88-amino-acid polypeptide reads, in one-letter code: Small ribosomal subunit protein bS20 (88 aa).

Positions M1 to M27 are disordered. A compositionally biased stretch (basic residues) spans A7–Q22.

Belongs to the bacterial ribosomal protein bS20 family.

In terms of biological role, binds directly to 16S ribosomal RNA. The polypeptide is Small ribosomal subunit protein bS20 (Alkalilimnicola ehrlichii (strain ATCC BAA-1101 / DSM 17681 / MLHE-1)).